A 621-amino-acid polypeptide reads, in one-letter code: Glutathione-regulated potassium-efflux system protein KefC (621 aa).

The next 12 helical transmembrane spans lie at 4–24 (HTLI…PIAV), 26–46 (LGLG…PWGL), 54–74 (AILH…GLEL), 90–110 (GALQ…LLGL), 114–134 (VAEL…MQAM), 149–169 (FAVL…IPLL), 178–198 (LVAF…VVAL), 218–238 (VFSA…EEVG), 270–290 (GLLL…GTLV), 294–314 (LRIV…LWLI), 326–346 (RWFA…FGAA), and 359–379 (ALTL…VLLT). The RCK N-terminal domain occupies 399 to 518 (QPRVIVAGFG…AGVEAPERET (120 aa)). Residues 598–621 (GWQGTEEGRHTGDIADEPENKPSA) are disordered.

It belongs to the monovalent cation:proton antiporter 2 (CPA2) transporter (TC 2.A.37) family. KefC subfamily. As to quaternary structure, homodimer. Interacts with the regulatory subunit KefF.

The protein localises to the cell inner membrane. Functionally, pore-forming subunit of a potassium efflux system that confers protection against electrophiles. Catalyzes K(+)/H(+) antiport. This is Glutathione-regulated potassium-efflux system protein KefC from Klebsiella pneumoniae (strain 342).